Reading from the N-terminus, the 372-residue chain is Homeobox protein Nkx-2.1 (372 aa).

Residues 161–220 (RRKRRVLFSQAQVYELERRFKQQKYLSAPEREHLASMIHLTPTQVKIWFQNHRYKMKRQA) constitute a DNA-binding region (homeobox). 3 disordered regions span residues 219–258 (QAKD…SPRR), 269–288 (KPCQ…SHAQ), and 312–340 (AGLG…SPAG). A compositionally biased stretch (gly residues) spans 233–244 (SGGGGGGGGGAG). Residues 245–254 (CPQQQQAQQQ) show a composition bias toward low complexity. S255 carries the phosphoserine modification. Residues 273 to 288 (AGAPAPGAASLQSHAQ) show a composition bias toward low complexity.

The protein belongs to the NK-2 homeobox family. Interacts with WWTR1. Post-translationally, phosphorylated on serine residues by STK3/MST2. In terms of tissue distribution, thyroid, lung and brain.

It localises to the nucleus. In terms of biological role, transcription factor that binds and activates the promoter of thyroid specific genes such as thyroglobulin, thyroperoxidase, and thyrotropin receptor. Crucial in the maintenance of the thyroid differentiation phenotype. May play a role in lung development and surfactant homeostasis. Forms a regulatory loop with GRHL2 that coordinates lung epithelial cell morphogenesis and differentiation. Activates the transcription of GNRHR and plays a role in enhancing the circadian oscillation of its gene expression. Represses the transcription of the circadian transcriptional repressor NR1D1. In Mus musculus (Mouse), this protein is Homeobox protein Nkx-2.1.